A 415-amino-acid chain; its full sequence is MLFWTVLSMALSLRLALAQSGIERGPTASAPQGDLLFLLDSSASVSHYEFSRVREFVGQLVATMPFGPGALRASLVHVGSRPHTEFTFDQYSSGQAIQDAVRVAPQRMGDTNTGLALAYAKEQLFAEEAGARLGVPKVLVWVTDGASSDSVGPPMQELKDLGVTIFIVSTGRGNLLELLAAASAPAEKHLHFVDVDDLPIIARELRGAIIDAMQPHQLHASEILSNGFRLSWPPLLTADSGYYVLELVPSGKLAATRRQQLPGNATSWTWTDLNPDTDYEVSLLPESNVRLLRPQHLRVRTLQEEAGPERIVISHTRPRSLRVSWAPALGPDSTLGYLVQLGPLQGGSLEHVEVPAGQNSTTIQGLTPCTTYLVTVTAAFRSGRQRALSAKACTASGERIRVPQAMRPEAGLREP.

A signal peptide spans 1–18 (MLFWTVLSMALSLRLALA). Residues 34–213 (DLLFLLDSSA…ELRGAIIDAM (180 aa)) form the VWFA domain. A phosphoserine mark is found at serine 74, serine 80, and serine 93. 2 consecutive Fibronectin type-III domains span residues 214–305 (QPHQ…LQEE) and 307–405 (GPER…VPQA). Asparagine 264 carries an N-linked (GlcNAc...) asparagine glycan. Cysteines 369 and 393 form a disulfide.

As to quaternary structure, homodimer or homomultimer; disulfide-linked. Interacts with HSPG2. In terms of processing, N-glycosylated.

It is found in the secreted. The protein resides in the extracellular space. Its subcellular location is the extracellular matrix. The protein localises to the basement membrane. Functionally, promotes matrix assembly. Involved in the organization of skeletal muscles and in the formation of neuromuscular junctions. This chain is von Willebrand factor A domain-containing protein 1 (Vwa1), found in Rattus norvegicus (Rat).